The chain runs to 379 residues: Tetraacyldisaccharide 4'-kinase (379 aa).

Residue 63–70 participates in ATP binding; the sequence is AVGGAGKT.

Belongs to the LpxK family.

The catalysed reaction is a lipid A disaccharide + ATP = a lipid IVA + ADP + H(+). It participates in glycolipid biosynthesis; lipid IV(A) biosynthesis; lipid IV(A) from (3R)-3-hydroxytetradecanoyl-[acyl-carrier-protein] and UDP-N-acetyl-alpha-D-glucosamine: step 6/6. Its function is as follows. Transfers the gamma-phosphate of ATP to the 4'-position of a tetraacyldisaccharide 1-phosphate intermediate (termed DS-1-P) to form tetraacyldisaccharide 1,4'-bis-phosphate (lipid IVA). The chain is Tetraacyldisaccharide 4'-kinase from Anaeromyxobacter dehalogenans (strain 2CP-1 / ATCC BAA-258).